A 259-amino-acid polypeptide reads, in one-letter code: Methyltransferase sdnD (259 aa).

It belongs to the FkbM methyltransferase family.

The protein operates within antibiotic biosynthesis. Functionally, methyltransferase; part of the gene cluster that mediates the biosynthesis of sordarin and hypoxysordarin, glycoside antibiotics with a unique tetracyclic diterpene aglycone structure. First, the geranylgeranyl diphosphate synthase sdnC constructs GGDP from farnesyl diphosphate and isopentenyl diphosphate. The diterpene cyclase sdnA then catalyzes the cyclization of GGDP to afford cycloaraneosene. Cycloaraneosene is then hydroxylated four times by the putative cytochrome P450 monooxygenases sdnB, sdnE, sdnF and sdnH to give a hydroxylated cycloaraneosene derivative such as cycloaraneosene-8,9,13,19-tetraol. Although the order of the hydroxylations is unclear, at least C8, C9 and C13 of the cycloaraneosene skeleton are hydroxylated before the sordaricin formation. Dehydration of the 13-hydroxy group of the hydroxylated cycloaraneosene derivative might be catalyzed by an unassigned hypothetical protein such as sdnG and sdnP to construct the cyclopentadiene moiety. The FAD-dependent oxidoreductase sdnN is proposed to catalyze the oxidation at C9 of the hydroxylated cycloaraneosene derivative and also catalyze the Baeyer-Villiger oxidation to give the lactone intermediate. The presumed lactone intermediate would be hydrolyzed to give an acrolein moiety and a carboxylate moiety. Then, [4+2]cycloaddition would occur between the acrolein moiety and the cyclopentadiene moiety to give sordaricin. SdnN might also be involved in the [4+2]cycloaddition after the hypothesized oxidation to accommodate the oxidized product and prompt the [4+2]cycloaddition. GDP-6-deoxy-D-altrose may be biosynthesized from GDP-D-mannose by the putative GDP-mannose-4,6-dehydratase sdnI and the short-chain dehydrogenase sdnK. The glycosyltransferase sdnJ catalyzes the attachment of 6-deoxy-D-altrose onto the 19-hydroxy group of sordaricin to give 4'-O-demethylsordarin. The methyltransferase sdnD would complete the biosynthesis of sordarin. Sordarin can be further modified into hypoxysordarin. The unique acyl chain at the 3'-hydroxy group of hypoxysordarin would be constructed by an iterative type I PKS sdnO and the trans-acting polyketide methyltransferase sdnL. SdnL would be responsible for the introduction of an alpha-methyl group of the polyketide chain. Alternatively, the beta-lactamase-like protein sdnR might be responsible for the cleavage and transfer of the polyketide chain from the PKS sdnO to sordarin. Two putative cytochrome P450 monooxygenases, sdnQ and sdnT, might catalyze the epoxidations of the polyketide chain to complete the biosynthesis of hypoxysordarin. Transcriptional regulators sdnM and sdnS are presumably encoded for the transcriptional regulation of the expression of the sdn gene cluster. The polypeptide is Methyltransferase sdnD (Sordaria araneosa (Pleurage araneosa)).